We begin with the raw amino-acid sequence, 355 residues long: Histidinol-phosphate aminotransferase 2 (355 aa).

Lys-210 bears the N6-(pyridoxal phosphate)lysine mark.

The protein belongs to the class-II pyridoxal-phosphate-dependent aminotransferase family. Histidinol-phosphate aminotransferase subfamily. Homodimer. Pyridoxal 5'-phosphate serves as cofactor.

The catalysed reaction is L-histidinol phosphate + 2-oxoglutarate = 3-(imidazol-4-yl)-2-oxopropyl phosphate + L-glutamate. It participates in amino-acid biosynthesis; L-histidine biosynthesis; L-histidine from 5-phospho-alpha-D-ribose 1-diphosphate: step 7/9. The protein is Histidinol-phosphate aminotransferase 2 of Gluconobacter oxydans (strain 621H) (Gluconobacter suboxydans).